The primary structure comprises 168 residues: Cytochrome c oxidase subunit 2 (168 aa).

At 1–3 (MVD) the chain is on the cytoplasmic side. A helical membrane pass occupies residues 4–38 (EHKAHKAILAYEKGWLAFSLAMLFVFIALIAYTLA). The Periplasmic segment spans residues 39–168 (THTAGVIPAG…NMFGTIVVKE (130 aa)). Residues H114, C149, C153, and H157 each contribute to the Cu cation site.

The protein belongs to the cytochrome c oxidase subunit 2 family.

Its subcellular location is the cell membrane. The catalysed reaction is 4 Fe(II)-[cytochrome c] + O2 + 8 H(+)(in) = 4 Fe(III)-[cytochrome c] + 2 H2O + 4 H(+)(out). Functionally, subunits I and II form the functional core of the enzyme complex. Electrons originating in cytochrome c are transferred via heme a and Cu(A) to the binuclear center formed by heme a3 and Cu(B). This Thermus thermophilus (strain ATCC 27634 / DSM 579 / HB8) protein is Cytochrome c oxidase subunit 2 (cbaB).